Consider the following 731-residue polypeptide: 1,4-alpha-glucan branching enzyme GlgB (731 aa).

Residue D411 is the Nucleophile of the active site. Catalysis depends on E464, which acts as the Proton donor.

The protein belongs to the glycosyl hydrolase 13 family. GlgB subfamily. Monomer.

It catalyses the reaction Transfers a segment of a (1-&gt;4)-alpha-D-glucan chain to a primary hydroxy group in a similar glucan chain.. It functions in the pathway glycan biosynthesis; glycogen biosynthesis. Its function is as follows. Catalyzes the formation of the alpha-1,6-glucosidic linkages in glycogen by scission of a 1,4-alpha-linked oligosaccharide from growing alpha-1,4-glucan chains and the subsequent attachment of the oligosaccharide to the alpha-1,6 position. The polypeptide is 1,4-alpha-glucan branching enzyme GlgB (Mycobacterium bovis (strain ATCC BAA-935 / AF2122/97)).